A 228-amino-acid chain; its full sequence is Prolactin-2B1 (228 aa).

Positions 1–31 (MLLYLPQIFSSRASSLLFLVPYLLFWENVAS) are cleaved as a signal peptide. 2 disulfides stabilise this stretch: C89–C194 and C203–C228. Residue N173 is glycosylated (N-linked (GlcNAc...) asparagine).

The protein belongs to the somatotropin/prolactin family. Expression restricted to the placenta in trophoblast cells within the labyrinth zone.

It localises to the secreted. This Rattus norvegicus (Rat) protein is Prolactin-2B1 (Prl2b1).